We begin with the raw amino-acid sequence, 212 residues long: Pyrrolidone-carboxylate peptidase (212 aa).

Residues Glu80, Cys143, and His165 contribute to the active site.

The protein belongs to the peptidase C15 family. In terms of assembly, homotetramer.

It is found in the cytoplasm. The enzyme catalyses Release of an N-terminal pyroglutamyl group from a polypeptide, the second amino acid generally not being Pro.. Removes 5-oxoproline from various penultimate amino acid residues except L-proline. This Vibrio vulnificus (strain CMCP6) protein is Pyrrolidone-carboxylate peptidase.